A 594-amino-acid polypeptide reads, in one-letter code: Putative diflavin flavoprotein A 4 (594 aa).

Residues 57–250 are zinc metallo-hydrolase; that stretch reads RRGTTSNSYL…LTLKMIAPGH (194 aa). The region spanning 279-417 is the Flavodoxin-like domain; the sequence is VALIYASAYG…VCTTSGANFA (139 aa). Residues 445-594 form a flavodoxin-reductase-like region; it reads VGRIIGSIGV…IRHRKSGGQY (150 aa).

It in the N-terminal section; belongs to the zinc metallo-hydrolase group 3 family. The protein in the C-terminal section; belongs to the flavodoxin reductase family. Fe cation is required as a cofactor.

In terms of biological role, mediates electron transfer from NADH to oxygen, reducing it to water. This modular protein has 3 redox cofactors, in other organisms the same activity requires 2 or 3 proteins. The chain is Putative diflavin flavoprotein A 4 (dfa4) from Synechocystis sp. (strain ATCC 27184 / PCC 6803 / Kazusa).